The following is an 83-amino-acid chain: Prolactin-releasing peptide (83 aa).

The signal sequence occupies residues 1–21 (MALKTWLLCLLLLSLVLPGAS). Phenylalanine amide is present on phenylalanine 52. The propeptide occupies 57-83 (ATPRDVTGLGQLSCLPLDGRTKFSQRG).

As to expression, widely expressed, with highest levels in medulla oblongata and hypothalamus.

Its subcellular location is the secreted. Stimulates prolactin (PRL) release and regulates the expression of prolactin through its receptor GPR10. May stimulate lactotrophs directly to secrete PRL. The protein is Prolactin-releasing peptide (Prlh) of Rattus norvegicus (Rat).